We begin with the raw amino-acid sequence, 572 residues long: Proline--tRNA ligase (572 aa).

This sequence belongs to the class-II aminoacyl-tRNA synthetase family. ProS type 1 subfamily. In terms of assembly, homodimer.

The protein localises to the cytoplasm. It carries out the reaction tRNA(Pro) + L-proline + ATP = L-prolyl-tRNA(Pro) + AMP + diphosphate. Functionally, catalyzes the attachment of proline to tRNA(Pro) in a two-step reaction: proline is first activated by ATP to form Pro-AMP and then transferred to the acceptor end of tRNA(Pro). As ProRS can inadvertently accommodate and process non-cognate amino acids such as alanine and cysteine, to avoid such errors it has two additional distinct editing activities against alanine. One activity is designated as 'pretransfer' editing and involves the tRNA(Pro)-independent hydrolysis of activated Ala-AMP. The other activity is designated 'posttransfer' editing and involves deacylation of mischarged Ala-tRNA(Pro). The misacylated Cys-tRNA(Pro) is not edited by ProRS. This is Proline--tRNA ligase from Hydrogenovibrio crunogenus (strain DSM 25203 / XCL-2) (Thiomicrospira crunogena).